The sequence spans 82 residues: Small ribosomal subunit protein eS21 (82 aa).

Belongs to the eukaryotic ribosomal protein eS21 family.

This chain is Small ribosomal subunit protein eS21 (RPS21), found in Cyanophora paradoxa.